A 176-amino-acid chain; its full sequence is RNA pyrophosphohydrolase (176 aa).

Positions 6-149 constitute a Nudix hydrolase domain; it reads GYRPNVGIVI…KRDVYRRVMK (144 aa). The Nudix box motif lies at 38–59; sequence GGINPGESAEQAMYRELFEEVG.

It belongs to the Nudix hydrolase family. RppH subfamily. It depends on a divalent metal cation as a cofactor.

Its function is as follows. Accelerates the degradation of transcripts by removing pyrophosphate from the 5'-end of triphosphorylated RNA, leading to a more labile monophosphorylated state that can stimulate subsequent ribonuclease cleavage. This chain is RNA pyrophosphohydrolase, found in Shigella boydii serotype 18 (strain CDC 3083-94 / BS512).